An 865-amino-acid chain; its full sequence is General transcription factor 3C polypeptide 5 (865 aa).

Disordered regions lie at residues 1–21 (MNDETNKNNSNINNNNNNNNS), 111–163 (RPNK…NEKF), 191–215 (NNNTKSESDNVNDSSSSSSSKTVPI), 391–522 (QDNH…NKEG), and 669–865 (DNKM…EESE). Low complexity-rich tracts occupy residues 7–21 (KNNSNINNNNNNNNS), 115–126 (QQTQTQTQTQTQ), 140–158 (QSPKTTSRSKQQQQQQQPQ), 199–210 (DNVNDSSSSSSS), and 401–411 (SKNNNNNNNNK). Basic and acidic residues-rich tracts occupy residues 412-439 (DSIKNKEKDNSNKEDKEHKEDKEDKQEE) and 448-489 (NNEK…KGDD). 2 stretches are compositionally biased toward low complexity: residues 508 to 521 (EGNNNNNNNNNNKE) and 677 to 696 (RSNTSTATTTSTKSTQPKST). 3 stretches are compositionally biased toward basic and acidic residues: residues 697–713 (QPKEPKLKSTQPKEPRP), 757–766 (QNKEIDESLK), and 773–786 (MEKDNEYLHGKNEE). Composition is skewed to acidic residues over residues 800–820 (DYDDDDDDEDKPFELLDDFDG) and 839–865 (EDSEEDESDFDEEEEEEEEDFEFEESE).

This sequence belongs to the TFIIIC subunit 5 family. In terms of assembly, part of the TFIIIC complex.

The protein resides in the nucleus. Involved in RNA polymerase III-mediated transcription. Integral, tightly associated component of the DNA-binding TFIIIC2 subcomplex that directly binds tRNA and virus-associated RNA promoters. This chain is General transcription factor 3C polypeptide 5 (gtf3c5), found in Dictyostelium discoideum (Social amoeba).